Consider the following 701-residue polypeptide: Pentatricopeptide repeat-containing protein At5g50390, chloroplastic (701 aa).

The N-terminal 47 residues, 1-47, are a transit peptide targeting the chloroplast; sequence MEIPLSRYQSIRLDEIRDSSSNPKVLTFPRKFSLRGRRWKNPFGRLS. PPR repeat units lie at residues 86 to 116, 122 to 156, 157 to 187, 188 to 218, 223 to 257, 258 to 288, 289 to 323, 324 to 358, 359 to 389, 390 to 424, 425 to 460, and 461 to 491; these read SGVT…LEIR, GVST…GFEP, EQYM…IPER, NLYS…MWEE, ETHT…GVVD, NTFV…MPEK, TTVA…GVSI, DQFT…GFES, EIVA…LPRK, NIIS…NVAP, NHVT…GIKP, and RAMH…APLK. Residues 496–571 are type E motif; that stretch reads MWAALLNACR…MPACTWVEVG (76 aa). The type E(+) motif; degenerate stretch occupies residues 572-606; that stretch reads DQTHSFLSGDRFDSYNETVKRQIYQKVDELMEEIS. The type DYW motif stretch occupies residues 607–701; it reads EYGYSEEEQH…EGKCSCGGYW (95 aa).

The protein belongs to the PPR family. PCMP-H subfamily.

Its subcellular location is the plastid. The protein resides in the chloroplast. This Arabidopsis thaliana (Mouse-ear cress) protein is Pentatricopeptide repeat-containing protein At5g50390, chloroplastic (PCMP-H58).